We begin with the raw amino-acid sequence, 326 residues long: Ribosome biogenesis protein BRX1 homolog (326 aa).

Residues Met1–Pro17 are compositionally biased toward basic and acidic residues. The disordered stretch occupies residues Met1–Lys66. A compositionally biased stretch (acidic residues) spans Val22–Glu57. The Brix domain occupies Lys75 to Gly268.

It belongs to the BRX1 family.

It localises to the nucleus. The protein localises to the nucleolus. Functionally, required for biogenesis of the 60S ribosomal subunit. The polypeptide is Ribosome biogenesis protein BRX1 homolog (bxdc2) (Dictyostelium discoideum (Social amoeba)).